A 322-amino-acid polypeptide reads, in one-letter code: Heterogeneous nuclear ribonucleoprotein D-like (322 aa).

Residues 1-36 form a disordered region; sequence MTGTARSALPLPQSPARALRPSGAARAAPSLSPSRF. The residue at position 6 (Arg6) is an Omega-N-methylarginine. Residues 14–36 show a composition bias toward low complexity; it reads SPARALRPSGAARAAPSLSPSRF. RRM domains lie at 51-133 and 136-215; these read NKMF…KGKE and KKVF…QPKE. The residue at position 64 (Lys64) is an N6-methyllysine. A Glycyl lysine isopeptide (Lys-Gly) (interchain with G-Cter in SUMO2) cross-link involves residue Lys112. Lys119 is subject to N6-acetyllysine. At Ser144 the chain carries Phosphoserine. 2 disordered regions span residues 216 to 251 and 299 to 322; these read VYRQQQQQQKGGRGAAAGGRGGARGRGRGQGQNWNQ and SGQQSTYGKASRGGGNHQNNYQPY. Positions 226 to 245 are enriched in gly residues; sequence GGRGAAAGGRGGARGRGRGQ. A necessary for interaction with TNPO1 region spans residues 245–322; sequence QGQNWNQGFN…GNHQNNYQPY (78 aa). Arg310 carries the post-translational modification Dimethylated arginine; alternate. The residue at position 310 (Arg310) is an Omega-N-methylarginine; alternate.

In terms of assembly, interacts with TNPO1 and ZNF148. In terms of processing, dimethylation of Arg-310 is probably of the asymmetric type.

It is found in the nucleus. The protein localises to the cytoplasm. In terms of biological role, acts as a transcriptional regulator. Promotes transcription repression. Promotes transcription activation in differentiated myotubes. Binds to double- and single-stranded DNA sequences. Binds to the transcription suppressor CATR sequence of the COX5B promoter. Binds with high affinity to RNA molecules that contain AU-rich elements (AREs) found within the 3'-UTR of many proto-oncogenes and cytokine mRNAs. Binds both to nuclear and cytoplasmic poly(A) mRNAs. Binds to poly(G) and poly(A), but not to poly(U) or poly(C) RNA homopolymers. Binds to the 5'-ACUAGC-3' RNA consensus sequence. The chain is Heterogeneous nuclear ribonucleoprotein D-like (Hnrnpdl) from Rattus norvegicus (Rat).